A 69-amino-acid chain; its full sequence is Beta-defensin 1 (69 aa).

An N-terminal signal peptide occupies residues 1–21 (MKTHYFLLVMICFLFSQMEPG). Positions 22–32 (VGILTSLGRRT) are excised as a propeptide. Cystine bridges form between Cys37/Cys66, Cys44/Cys59, and Cys49/Cys67.

It belongs to the beta-defensin family. In terms of assembly, monomer. Homodimer. As to expression, detected in kidney.

It localises to the secreted. Its subcellular location is the membrane. Its function is as follows. Has bactericidal activity. May act as a ligand for C-C chemokine receptor CCR6. Positively regulates the sperm motility and bactericidal activity in a CCR6-dependent manner. Binds to CCR6 and triggers Ca2+ mobilization in the sperm which is important for its motility. This is Beta-defensin 1 (Defb1) from Mus musculus (Mouse).